We begin with the raw amino-acid sequence, 165 residues long: Large ribosomal subunit protein uL30 (165 aa).

This sequence belongs to the universal ribosomal protein uL30 family. In terms of assembly, part of the 50S ribosomal subunit.

The chain is Large ribosomal subunit protein uL30 from Thermoplasma volcanium (strain ATCC 51530 / DSM 4299 / JCM 9571 / NBRC 15438 / GSS1).